Reading from the N-terminus, the 264-residue chain is 2-dehydro-3-deoxy-D-gluconate 5-dehydrogenase (264 aa).

14–38 (LVTGSTHGLGMAMAKGLGLAGATIV) contacts NAD(+). Residue Ser147 coordinates substrate. Tyr160 serves as the catalytic Proton acceptor.

This sequence belongs to the short-chain dehydrogenases/reductases (SDR) family. In terms of assembly, homotetramer.

It localises to the cytoplasm. The enzyme catalyses 2-dehydro-3-deoxy-D-gluconate + NAD(+) = 3-deoxy-D-glycero-2,5-hexodiulosonate + NADH + H(+). 2-dehydro-3-deoxy-D-gluconate 5-dehydrogenase involved in ulvan degradation. Ulvan is the main polysaccharide component of the Ulvales (green seaweed) cell wall. It is composed of disaccharide building blocks comprising 3-sulfated rhamnose (Rha3S) linked to D-glucuronic acid (GlcA), L-iduronic acid (IduA), or D-xylose (Xyl). Catalyzes the reversible reduction of 2,5-diketo-3-deoxygluconate (DKII or 4,6-dihydroxy-2,5-dioxohexanoate) into 2-keto-3-deoxygluconate (KDG or 2-dehydro-3-deoxygluconate) with a concomitant oxidation of NADH. The polypeptide is 2-dehydro-3-deoxy-D-gluconate 5-dehydrogenase (kduD) (Formosa agariphila (strain DSM 15362 / KCTC 12365 / LMG 23005 / KMM 3901 / M-2Alg 35-1)).